A 491-amino-acid polypeptide reads, in one-letter code: Angiopoietin-related protein 1 (491 aa).

Positions 1–23 (MKTFTWTLGVLFFLLVDTGHCRG) are cleaved as a signal peptide. Residues 80 to 168 (ITRMDLENLK…LNVTTEMLKM (89 aa)) are a coiled coil. 2 N-linked (GlcNAc...) asparagine glycosylation sites follow: N160 and N188. Residues 271–491 (FINEGPFKDC…AVQMMIKPID (221 aa)) enclose the Fibrinogen C-terminal domain. 2 cysteine pairs are disulfide-bonded: C280–C309 and C432–C445.

Highly expressed in adrenal gland, placenta, thyroid gland, heart, skeletal muscle and small intestine. Weakly expressed in testis, ovary, colon, pancreas, kidney and stomach.

It localises to the secreted. This chain is Angiopoietin-related protein 1 (ANGPTL1), found in Homo sapiens (Human).